The sequence spans 157 residues: Endoribonuclease YbeY (157 aa).

Residues histidine 111, histidine 115, and histidine 121 each contribute to the Zn(2+) site.

It belongs to the endoribonuclease YbeY family. Zn(2+) serves as cofactor.

The protein resides in the cytoplasm. In terms of biological role, single strand-specific metallo-endoribonuclease involved in late-stage 70S ribosome quality control and in maturation of the 3' terminus of the 16S rRNA. This chain is Endoribonuclease YbeY, found in Pseudomonas entomophila (strain L48).